Consider the following 365-residue polypeptide: Aminomethyltransferase (365 aa).

Belongs to the GcvT family. As to quaternary structure, the glycine cleavage system is composed of four proteins: P, T, L and H.

The catalysed reaction is N(6)-[(R)-S(8)-aminomethyldihydrolipoyl]-L-lysyl-[protein] + (6S)-5,6,7,8-tetrahydrofolate = N(6)-[(R)-dihydrolipoyl]-L-lysyl-[protein] + (6R)-5,10-methylene-5,6,7,8-tetrahydrofolate + NH4(+). The glycine cleavage system catalyzes the degradation of glycine. In Chlorobaculum tepidum (strain ATCC 49652 / DSM 12025 / NBRC 103806 / TLS) (Chlorobium tepidum), this protein is Aminomethyltransferase.